A 264-amino-acid chain; its full sequence is Thiazole synthase (264 aa).

K106 functions as the Schiff-base intermediate with DXP in the catalytic mechanism. 1-deoxy-D-xylulose 5-phosphate-binding positions include G167, 193 to 194 (AG), and 215 to 216 (NS).

It belongs to the ThiG family. As to quaternary structure, homotetramer. Forms heterodimers with either ThiH or ThiS.

It is found in the cytoplasm. It catalyses the reaction [ThiS sulfur-carrier protein]-C-terminal-Gly-aminoethanethioate + 2-iminoacetate + 1-deoxy-D-xylulose 5-phosphate = [ThiS sulfur-carrier protein]-C-terminal Gly-Gly + 2-[(2R,5Z)-2-carboxy-4-methylthiazol-5(2H)-ylidene]ethyl phosphate + 2 H2O + H(+). The protein operates within cofactor biosynthesis; thiamine diphosphate biosynthesis. Catalyzes the rearrangement of 1-deoxy-D-xylulose 5-phosphate (DXP) to produce the thiazole phosphate moiety of thiamine. Sulfur is provided by the thiocarboxylate moiety of the carrier protein ThiS. In vitro, sulfur can be provided by H(2)S. The chain is Thiazole synthase from Prochlorococcus marinus (strain MIT 9301).